The primary structure comprises 334 residues: MAARKETGNTAPIAETAVKQVQIDGLVVLKIIKHYQEEGHGSEVVQGVLLGLVVDDRLEITNCFPFPQHTEDDVDFDEVQYQMEMMRSLRHVNIDHLHVGWYQSTFYGTFVSRALLDSQFSYQHAIEESVVLIYDPIKTSQGSLSLKAYRLTPKLMEICKEKDFSAEGLKKANVAYEDMFEEVPIVIKNSHLINVLVWELDKKAPVTEKHELLNLSSSNHLEKSLQLLMDRVDEMSQDIVKYNTYQRNVGKQQQQKHQYTQRKQQENLQRLSRGETPLPEEDVNKMFKPPVTPSRMDPLLIAGQINTYIQHIKGFTSQNLGKLFMAEALQDQTN.

The MPN domain maps to 21–155 (VQIDGLVVLK…LKAYRLTPKL (135 aa)). A disordered region spans residues 247–284 (RNVGKQQQQKHQYTQRKQQENLQRLSRGETPLPEEDVN). The span at 251–262 (KQQQQKHQYTQR) shows a compositional bias: low complexity.

The protein belongs to the eIF-3 subunit H family. Component of the eukaryotic translation initiation factor 3 (eIF-3) complex, which is composed of 13 subunits: eif3a, eif3b, eif3c, eif3d, eif3e, eif3f, eif3g, eif3h, eif3i, eif3j, eif3k, eif3l and eif3m.

It is found in the cytoplasm. Its function is as follows. Component of the eukaryotic translation initiation factor 3 (eIF-3) complex, which is involved in protein synthesis of a specialized repertoire of mRNAs and, together with other initiation factors, stimulates binding of mRNA and methionyl-tRNAi to the 40S ribosome. The eIF-3 complex specifically targets and initiates translation of a subset of mRNAs involved in cell proliferation. The chain is Eukaryotic translation initiation factor 3 subunit H (eif3h) from Xenopus laevis (African clawed frog).